A 363-amino-acid chain; its full sequence is DNA polymerase IV (363 aa).

The UmuC domain occupies 14–197 (IIHIDMDAFF…LPVEKFHGVG (184 aa)). Positions 18 and 115 each coordinate Mg(2+). The active site involves glutamate 116.

It belongs to the DNA polymerase type-Y family. In terms of assembly, monomer. The cofactor is Mg(2+).

Its subcellular location is the cytoplasm. It carries out the reaction DNA(n) + a 2'-deoxyribonucleoside 5'-triphosphate = DNA(n+1) + diphosphate. Poorly processive, error-prone DNA polymerase involved in untargeted mutagenesis. Copies undamaged DNA at stalled replication forks, which arise in vivo from mismatched or misaligned primer ends. These misaligned primers can be extended by PolIV. Exhibits no 3'-5' exonuclease (proofreading) activity. May be involved in translesional synthesis, in conjunction with the beta clamp from PolIII. The chain is DNA polymerase IV from Lactococcus lactis subsp. lactis (strain IL1403) (Streptococcus lactis).